We begin with the raw amino-acid sequence, 246 residues long: MIILSGQPVTNEQLASFQLEGQKRIILMQLQASNDTFRYRQASDLLFEVTLRSNIMNAARDLNKSGASFAIFQRSRANDAFWRVSEAGALELRYQVEPSRGIKDIFENGSQYAFECATAIVIVFYMGVLQTVGDEKFNRRLRSLTLYDWHYDTLSIYTERGNDFIYGDCLYFENPEFSYQQSQWRGENVIYLGEDQYYGHGLGILTAAEIIDKLNKRRRPGAVQSAYLLPQTTRMDVIYLRQMFGS.

The protein belongs to the bacillus TGase family.

The enzyme catalyses L-glutaminyl-[protein] + L-lysyl-[protein] = [protein]-L-lysyl-N(6)-5-L-glutamyl-[protein] + NH4(+). Functionally, probably plays a role in the assembly of the spore coat proteins by catalyzing epsilon-(gamma-glutamyl)lysine cross-links. The chain is Protein-glutamine gamma-glutamyltransferase from Bacillus pumilus (strain SAFR-032).